Here is a 191-residue protein sequence, read N- to C-terminus: Protein GrpE (191 aa).

Basic and acidic residues predominate over residues 1 to 19; it reads MKDEHNQKHDHLSQKEPES. The tract at residues 1–44 is disordered; the sequence is MKDEHNQKHDHLSQKEPESYQKACACKEQQDEEMQEAGEKEGEI.

It belongs to the GrpE family. In terms of assembly, homodimer.

It localises to the cytoplasm. Participates actively in the response to hyperosmotic and heat shock by preventing the aggregation of stress-denatured proteins, in association with DnaK and GrpE. It is the nucleotide exchange factor for DnaK and may function as a thermosensor. Unfolded proteins bind initially to DnaJ; upon interaction with the DnaJ-bound protein, DnaK hydrolyzes its bound ATP, resulting in the formation of a stable complex. GrpE releases ADP from DnaK; ATP binding to DnaK triggers the release of the substrate protein, thus completing the reaction cycle. Several rounds of ATP-dependent interactions between DnaJ, DnaK and GrpE are required for fully efficient folding. In Helicobacter pylori (strain G27), this protein is Protein GrpE.